The primary structure comprises 217 residues: Kunitz-type trypsin inhibitor-like 1 protein (217 aa).

A signal peptide spans 1–26 (MKPLSPLTLSFFLFVFITNLSLAFSN). 2 disulfide bridges follow: Cys-70/Cys-115 and Cys-168/Cys-175. Asn-191 carries an N-linked (GlcNAc...) asparagine glycan.

Belongs to the protease inhibitor I3 (leguminous Kunitz-type inhibitor) family. As to expression, expressed in roots, leaves, epidermal layers of elongating stems, meristems and in the vascular system.

It localises to the secreted. Might act as a protease inhibitor involved in plant defense responses. The polypeptide is Kunitz-type trypsin inhibitor-like 1 protein (PIP20-1) (Pisum sativum (Garden pea)).